The primary structure comprises 211 residues: Small ribosomal subunit protein eS8 (211 aa).

This sequence belongs to the eukaryotic ribosomal protein eS8 family.

This is Small ribosomal subunit protein eS8 (rps8) from Dictyostelium discoideum (Social amoeba).